Here is a 545-residue protein sequence, read N- to C-terminus: Protein FAR1-RELATED SEQUENCE 9 (545 aa).

Positions 22-65 (LNYLKRRQLENPGFLYAIEDDCGNVFWADPTCRLNYTYFGDTLV) constitute an FAR1 domain. The 85-residue stretch at 66 to 150 (FDTTYRRGKR…RVFSQTRLRF (85 aa)) folds into the MULE domain. An SWIM-type zinc finger spans residues 345–381 (HTVSFDSLEVKANCSCQMFEYSGIICRHILAVFSAKN). The interval 460–495 (SNRTPGTRLPNGEAYPSEEARETANATNHPGGEKER) is disordered. A coiled-coil region spans residues 492-545 (EKERTILELTAELERTGQRCEVYRANLLSILRDMEEQKFQLSLKVQNARLSLKE).

Belongs to the FHY3/FAR1 family. As to expression, expressed in hypocotyls, rosette and cauline leaves, inflorescences stems, flowers and siliques.

It is found in the nucleus. Its function is as follows. Putative transcription activator involved in regulating light control of development. May act as a negative regulator specific to phyB signaling. The protein is Protein FAR1-RELATED SEQUENCE 9 (FRS9) of Arabidopsis thaliana (Mouse-ear cress).